Reading from the N-terminus, the 204-residue chain is Leucyl/phenylalanyl-tRNA--protein transferase (204 aa).

Belongs to the L/F-transferase family.

It localises to the cytoplasm. It carries out the reaction N-terminal L-lysyl-[protein] + L-leucyl-tRNA(Leu) = N-terminal L-leucyl-L-lysyl-[protein] + tRNA(Leu) + H(+). It catalyses the reaction N-terminal L-arginyl-[protein] + L-leucyl-tRNA(Leu) = N-terminal L-leucyl-L-arginyl-[protein] + tRNA(Leu) + H(+). The catalysed reaction is L-phenylalanyl-tRNA(Phe) + an N-terminal L-alpha-aminoacyl-[protein] = an N-terminal L-phenylalanyl-L-alpha-aminoacyl-[protein] + tRNA(Phe). Functions in the N-end rule pathway of protein degradation where it conjugates Leu, Phe and, less efficiently, Met from aminoacyl-tRNAs to the N-termini of proteins containing an N-terminal arginine or lysine. The sequence is that of Leucyl/phenylalanyl-tRNA--protein transferase from Sinorhizobium fredii (strain NBRC 101917 / NGR234).